The primary structure comprises 259 residues: MGAPGAAEARERIRRGEHAGPTAGLAPGYAQANLVILPEEHALDFLRFCVRNPKPCPLLEVTDTGSPVPRTLAPGADLRTDVPRYRVYERGKLVEEPADILPRWRGDLVCFLLGCSFTFERALLAAGLRLAHVEQGRNVPMYVTNRRCAPSGPFAGPLVVSMRPYRPEEVPRAVSVSARYPAMHGAPVHVGRPEALGIKDLGRPDFGDAVILGEGEIPVFWACGVTPQAVALQAGLPLVITHSPGHMFVTDRRDAEYEV.

Residues 1-24 (MGAPGAAEARERIRRGEHAGPTAG) form a disordered region. Residues 8 to 18 (EARERIRRGEH) show a composition bias toward basic and acidic residues.

It belongs to the D-glutamate cyclase family.

This Rubrobacter xylanophilus (strain DSM 9941 / JCM 11954 / NBRC 16129 / PRD-1) protein is Putative hydro-lyase Rxyl_2409.